Here is a 592-residue protein sequence, read N- to C-terminus: Keratin, type II cytoskeletal 5 (592 aa).

The span at 1-18 (MSRQSSVSFRSGGSRSFS) shows a compositional bias: low complexity. The tract at residues 1–20 (MSRQSSVSFRSGGSRSFSTA) is disordered. The segment at 1-169 (MSRQSSVSFR…DPSIQRVRTE (169 aa)) is head. 4 positions are modified to phosphoserine: serine 5, serine 8, serine 16, and serine 21. A Phosphothreonine; by CDK1 modification is found at threonine 24. 7 positions are modified to phosphoserine: serine 26, serine 36, serine 50, serine 64, serine 71, serine 75, and serine 82. Threonine 153 carries the post-translational modification Phosphothreonine; by CDK1. A Phosphothreonine; by AURKB modification is found at threonine 168. Residues 170 to 205 (EREQIKTLNNKFASFIDKVRFLEQQNKVLDTKWTLL) form a coil 1A region. The IF rod domain occupies 170–483 (EREQIKTLNN…KLLEGEECRL (314 aa)). The segment at 206–224 (QEQGTKTVRQNLEPLFEQY) is linker 1. The interval 225 to 317 (INNLRRQLDS…FFDAELSQMQ (93 aa)) is coil 1B. Residues 318–340 (THVSDTSVVLSMDNNRNLDLDSI) form a linker 12 region. The interval 341 to 479 (IAEVKAQYEE…ATYRKLLEGE (139 aa)) is coil 2. The segment at 480 to 592 (ECRLSGEGVG…TSSSRKSFKS (113 aa)) is tail. The disordered stretch occupies residues 568–592 (GSGGGSSSSVKFVSTTSSSRKSFKS). Over residues 574–592 (SSSVKFVSTTSSSRKSFKS) the composition is skewed to low complexity.

The protein belongs to the intermediate filament family. As to quaternary structure, heterodimer of a type I and a type II keratin. Heterodimer with type I keratin KRT25 leading to the formation of keratin intermediate filament (KIF) network. Forms a heterodimer (via 2B domains) with KRT14 (via 2B domains). Interacts with TCHP. Interacts with EPPK1. Interacts with AMELX. Interacts with PKP1 (via N-terminus) and PKP2. Post-translationally, phosphorylated by CDK1, AURKB and Rho-kinase, phosphorylation is regulated by the cell cycle. Thr-24 phosphorylation, mediated by CDK1, peaks during prometaphase or metaphase cells with phosphorylated filamentous structures evident throughout the cytoplasm during early mitosis. CDK1 phosphorylates Thr-24 in mitotic cells at the site of injury. O-glycosylated.

The protein resides in the cytoplasm. Required for the formation of keratin intermediate filaments in the basal epidermis and maintenance of the skin barrier in response to mechanical stress. Regulates the recruitment of Langerhans cells to the epidermis, potentially by modulation of the abundance of macrophage chemotactic cytokines, macrophage inflammatory cytokines and CTNND1 localization in keratinocytes. This chain is Keratin, type II cytoskeletal 5 (KRT5), found in Pan troglodytes (Chimpanzee).